A 265-amino-acid chain; its full sequence is Orotidine 5'-phosphate decarboxylase (265 aa).

Substrate is bound by residues aspartate 38, 60–62, 91–100, tyrosine 213, and arginine 232; these read KTH and DRKFADIGNT. Lysine 93 functions as the Proton donor in the catalytic mechanism.

This sequence belongs to the OMP decarboxylase family.

The enzyme catalyses orotidine 5'-phosphate + H(+) = UMP + CO2. Its pathway is pyrimidine metabolism; UMP biosynthesis via de novo pathway; UMP from orotate: step 2/2. The polypeptide is Orotidine 5'-phosphate decarboxylase (pyrG) (Mucor circinelloides f. lusitanicus (Mucor racemosus var. lusitanicus)).